The primary structure comprises 151 residues: Putative calcium-binding protein CML23 (151 aa).

4 EF-hand domains span residues 2–37 (VASD…SLGE), 39–74 (MPDE…MEAD), 84–119 (ETCR…LGTH), and 120–151 (LDVA…MMMA). The Ca(2+) site is built by aspartate 15, aspartate 17, aspartate 19, lysine 21, glutamate 26, aspartate 52, aspartate 54, aspartate 56, and glutamate 63. Positions 133, 135, 137, and 144 each coordinate Ca(2+).

Potential calcium sensor. This Oryza sativa subsp. japonica (Rice) protein is Putative calcium-binding protein CML23 (CML23).